Consider the following 101-residue polypeptide: Small ribosomal subunit protein bS18c (101 aa).

It belongs to the bacterial ribosomal protein bS18 family. As to quaternary structure, component of the chloroplast small ribosomal subunit (SSU). Mature 70S chloroplast ribosomes of higher plants consist of a small (30S) and a large (50S) subunit. The 30S small subunit contains 1 molecule of ribosomal RNA (16S rRNA) and 24 different proteins. The 50S large subunit contains 3 rRNA molecules (23S, 5S and 4.5S rRNA) and 33 different proteins.

Its subcellular location is the plastid. The protein localises to the chloroplast. Its function is as follows. Component of the chloroplast ribosome (chloro-ribosome), a dedicated translation machinery responsible for the synthesis of chloroplast genome-encoded proteins, including proteins of the transcription and translation machinery and components of the photosynthetic apparatus. This Spinacia oleracea (Spinach) protein is Small ribosomal subunit protein bS18c (RPS18).